A 137-amino-acid chain; its full sequence is Profilin-3 (137 aa).

Belongs to the profilin family. Interacts with ACTRT3.

Its subcellular location is the cytoplasm. The protein localises to the cytoskeleton. It localises to the nucleus. Functionally, binds to actin and affects the structure of the cytoskeleton. Binds to poly-L-proline, phosphatidylinositol 3-phosphate (PtdIns(3)P), phosphatidylinositol 4,5-bisphosphate (PtdIns(4,5)P2) and phosphatidylinositol 4-phosphate (PtdIns(4)P). Slightly reduces actin polymerization. May be involved in spermatogenesis. In Bos taurus (Bovine), this protein is Profilin-3 (PFN3).